We begin with the raw amino-acid sequence, 435 residues long: Methylenetetrahydrofolate--tRNA-(uracil-5-)-methyltransferase TrmFO (435 aa).

7–12 (GAGLAG) contributes to the FAD binding site.

It belongs to the MnmG family. TrmFO subfamily. The cofactor is FAD.

The protein localises to the cytoplasm. The enzyme catalyses uridine(54) in tRNA + (6R)-5,10-methylene-5,6,7,8-tetrahydrofolate + NADH + H(+) = 5-methyluridine(54) in tRNA + (6S)-5,6,7,8-tetrahydrofolate + NAD(+). It carries out the reaction uridine(54) in tRNA + (6R)-5,10-methylene-5,6,7,8-tetrahydrofolate + NADPH + H(+) = 5-methyluridine(54) in tRNA + (6S)-5,6,7,8-tetrahydrofolate + NADP(+). In terms of biological role, catalyzes the folate-dependent formation of 5-methyl-uridine at position 54 (M-5-U54) in all tRNAs. This chain is Methylenetetrahydrofolate--tRNA-(uracil-5-)-methyltransferase TrmFO, found in Thermotoga maritima (strain ATCC 43589 / DSM 3109 / JCM 10099 / NBRC 100826 / MSB8).